The primary structure comprises 409 residues: tRNA(Met) cytidine acetate ligase (409 aa).

Residues 7–20, G102, N169, and R194 each bind ATP; that span reads VVEY…HLYH.

The protein belongs to the TmcAL family.

Its subcellular location is the cytoplasm. It carries out the reaction cytidine(34) in elongator tRNA(Met) + acetate + ATP = N(4)-acetylcytidine(34) in elongator tRNA(Met) + AMP + diphosphate. Catalyzes the formation of N(4)-acetylcytidine (ac(4)C) at the wobble position of elongator tRNA(Met), using acetate and ATP as substrates. First activates an acetate ion to form acetyladenylate (Ac-AMP) and then transfers the acetyl group to tRNA to form ac(4)C34. The chain is tRNA(Met) cytidine acetate ligase from Clostridium botulinum (strain Langeland / NCTC 10281 / Type F).